The sequence spans 182 residues: MSGRSVPHAHPATAEYEFANPSRLGEQRFGEGLLPEEILTPTLYHGYYVRPRAAPAGEGSRAGASELRLSEGKFQAFLDVSHFTPDEVTVRTVDNLLEVSARHPQRLDRHGFVSREFCRTYVLPADVDPWRVRAALSHDGILNLEAPRGGRHLDTEVNEVYISLLPAPPDPEEEEEAAIVEP.

The region spanning 55–163 (PAGEGSRAGA…DTEVNEVYIS (109 aa)) is the sHSP domain.

The protein belongs to the small heat shock protein (HSP20) family. As to quaternary structure, interacts with DMPK; may enhance its kinase activity. As to expression, expressed preferentially in skeletal muscle and heart but not in the lens.

Its subcellular location is the cytoplasm. It localises to the nucleus. Functionally, may regulate the kinase DMPK. This Homo sapiens (Human) protein is Heat shock protein beta-2 (HSPB2).